Consider the following 1083-residue polypeptide: MHLTIHNAHNGLTTSIQKPIRYHSYQSFKEYIVESFTNYILDDANNVFLLTQFGMRVDFNIINELNDIYFFDKRLFVNENPASILKDYATQTMRDIPPPKHPSLAPYSRGLNIRQMSSSLRSNAGWSMSVKVDAALADEQVRAYKRQISVMFRCLSIMFEFIASFTSDIENSFTKFYNHINQLSLKTLHEHWKSHYKTLASRPQFTFKNGKSVRLADMLNYDALVEASQFVERNLSTVIDQFNQLSATINEVNKSKIDIDGEIQVLRDESIAEFASLKASESLVEDIKSIGTAISTEIDSIASSESRVLGDIYTKHVESSKKLDEKYVQLYNDLTKLDQFKDKLAEKGTALFRHCARLQMQMVNVKLALNEFDSRKQEGKQRSAMQKVQEIKKKEEYLSLTIDLPLLFGFAIIEMRRQYEWYDFFASGAVSNVTEQLQVIINQERVFRKIWAKKIGSFLSILDSLPSDLSQTLPSLDVTVVKGREDFFGKFWIHDIQREDIDKYIKWVGSIDAGKHANFSMLLERNFEDLIKSTNAMKSVTKAIGTLSSYTSPENIDAVQPNDKKEDQDLIQGYKNRIRKLENLLHQQQFKDLSTWPVIKGATQDQSIIFNPKRNSGVGSDNVLVHSQHDAKILLQNHRSSIKDESSSRTDHLKLAKENEDLRKRLQELQIGGERRVEAKVPFEASLSGTKILAQQNTEILAQKKALEMKVDSQLQVIEKIQKESSEKDNEIFALKKQIQDLTGEANEFYARNEELKKNAEVKYDHLVQELNEEKDKSSSLSSELDAMKRGANDRKDAEKAIAELTSVASDLYGKLVDHSHITFDYVLTLSYILEKMGLMLTNEEGKNNVFKIRRVKGLRSRKQDGENSQTDVGSPVPGAIKNMMVWSHTDINVNPADMIESAKEIINVCRNKMDETFDKYNQVVAFRSNVSIEQVSEHDIRTIEFFSNAVVKRFKDVEGLAKKLAKEKKTYETQLQKLTRKMSAKVTLSNFQTNDLVLFLPTRLETKEPQEVIQPWTAFNIGTPHYFLKSQPSVEREWIVARIVSIVEHTVTATNKNDTSLNPYRLSEGITWFSVEAKEVSQ.

3 coiled-coil regions span residues 562 to 591, 648 to 812, and 953 to 988; these read NDKKEDQDLIQGYKNRIRKLENLLHQQQFK, SRTD…ASDL, and KRFKDVEGLAKKLAKEKKTYETQLQKLTRKMSAKVT.

The protein belongs to the ATG11 family. Homodimer.

It is found in the preautophagosomal structure membrane. The protein resides in the vacuole membrane. Involved in cytoplasm to vacuole transport (Cvt), pexophagy, mitophagy and nucleophagy. Recruits mitochondria for their selective degradation via autophagy (mitophagy) during starvation. Works as scaffold proteins that recruit ATG proteins to the pre-autophagosome (PAS), the site of vesicle/autophagosome formation. Required for the Cvt vesicles completion. The polypeptide is Autophagy-related protein 11 (ATG11) (Meyerozyma guilliermondii (strain ATCC 6260 / CBS 566 / DSM 6381 / JCM 1539 / NBRC 10279 / NRRL Y-324) (Yeast)).